Consider the following 218-residue polypeptide: Octanoyltransferase (218 aa).

In terms of domain architecture, BPL/LPL catalytic spans 34 to 209 (ETSRDELWIV…TFSQELGYQH (176 aa)). Substrate-binding positions include 73–80 (RGGQVTYH), 140–142 (SLG), and 153–155 (GLA). C171 functions as the Acyl-thioester intermediate in the catalytic mechanism.

It belongs to the LipB family.

Its subcellular location is the cytoplasm. It catalyses the reaction octanoyl-[ACP] + L-lysyl-[protein] = N(6)-octanoyl-L-lysyl-[protein] + holo-[ACP] + H(+). The protein operates within protein modification; protein lipoylation via endogenous pathway; protein N(6)-(lipoyl)lysine from octanoyl-[acyl-carrier-protein]: step 1/2. Functionally, catalyzes the transfer of endogenously produced octanoic acid from octanoyl-acyl-carrier-protein onto the lipoyl domains of lipoate-dependent enzymes. Lipoyl-ACP can also act as a substrate although octanoyl-ACP is likely to be the physiological substrate. In Shewanella loihica (strain ATCC BAA-1088 / PV-4), this protein is Octanoyltransferase.